A 595-amino-acid polypeptide reads, in one-letter code: Putative lipase atg15 (595 aa).

At 1-20 the chain is on the cytoplasmic side; it reads MKGLRGHNKKSFWGNTRLSD. Residues 21-41 traverse the membrane as a helical; Signal-anchor for type II membrane protein segment; it reads LLWPVTLLPGLISAYQPVYLG. Residues 42–595 are Lumenal-facing; sequence SRQSSPFLPP…TTTGKHLGRF (554 aa). 5 N-linked (GlcNAc...) asparagine glycosylation sites follow: Asn-164, Asn-199, Asn-221, Asn-279, and Asn-303. Residue Ser-319 is the Charge relay system of the active site. A glycan (N-linked (GlcNAc...) asparagine) is linked at Asn-465.

It belongs to the AB hydrolase superfamily. Lipase family. In terms of assembly, binds to both phosphatidylinositol (PI) and phosphatidylinositol 3,5-bisphosphate (PIP2).

It is found in the endosome. The protein localises to the multivesicular body membrane. It localises to the prevacuolar compartment membrane. It catalyses the reaction a triacylglycerol + H2O = a diacylglycerol + a fatty acid + H(+). Functionally, lipase which is essential for lysis of subvacuolar cytoplasm to vacuole targeted bodies and intravacuolar autophagic bodies. Involved in the lysis of intravacuolar multivesicular body (MVB) vesicles. The intravacuolar membrane disintegration by atg15 is critical to life span extension. This chain is Putative lipase atg15 (atg15), found in Aspergillus niger (strain ATCC MYA-4892 / CBS 513.88 / FGSC A1513).